Here is a 350-residue protein sequence, read N- to C-terminus: Guanine nucleotide-binding protein G(t) subunit alpha (350 aa).

Positions 1–21 (MGAGASAEEKHSRELEKKLKE) are disordered. The N-myristoyl glycine moiety is linked to residue glycine 2. Residues 7-21 (AEEKHSRELEKKLKE) are compositionally biased toward basic and acidic residues. Residues 28–350 (RTVKLLLLGA…KENLKDCGLF (323 aa)) form the G-alpha domain. A G1 motif region spans residues 31–44 (KLLLLGAGESGKST). GTP-binding positions include 36-43 (GAGESGKS), 171-177 (LRSRVKT), 196-200 (DVGGQ), 265-268 (NKKD), and alanine 322. Residues serine 43 and threonine 177 each contribute to the Mg(2+) site. The G2 motif stretch occupies residues 169 to 177 (DVLRSRVKT). The G3 motif stretch occupies residues 192 to 201 (FRMFDVGGQR). The tract at residues 261–268 (VLFLNKKD) is G4 motif. A G5 motif region spans residues 320–325 (TCATDT).

Belongs to the G-alpha family. G(i/o/t/z) subfamily. In terms of assembly, g proteins are composed of 3 units; alpha, beta and gamma. The alpha chain contains the guanine nucleotide binding site.

Guanine nucleotide-binding proteins (G proteins) are involved as modulators or transducers in various transmembrane signaling systems. Transducin is an amplifier and one of the transducers of a visual impulse that performs the coupling between rhodopsin and cGMP-phosphodiesterase. The sequence is that of Guanine nucleotide-binding protein G(t) subunit alpha (gnat) from Xenopus laevis (African clawed frog).